The chain runs to 883 residues: Valine--tRNA ligase (883 aa).

Positions 46 to 56 (PNVTGKLHLGH) match the 'HIGH' region motif. The 'KMSKS' region signature appears at 520–524 (KMSKS). K523 contacts ATP. Positions 809 to 844 (LADLLNVEEELARLEKELAKWQKELDMVGKKLSNER) form a coiled coil.

This sequence belongs to the class-I aminoacyl-tRNA synthetase family. ValS type 1 subfamily. In terms of assembly, monomer.

The protein localises to the cytoplasm. It carries out the reaction tRNA(Val) + L-valine + ATP = L-valyl-tRNA(Val) + AMP + diphosphate. In terms of biological role, catalyzes the attachment of valine to tRNA(Val). As ValRS can inadvertently accommodate and process structurally similar amino acids such as threonine, to avoid such errors, it has a 'posttransfer' editing activity that hydrolyzes mischarged Thr-tRNA(Val) in a tRNA-dependent manner. The sequence is that of Valine--tRNA ligase from Streptococcus thermophilus (strain CNRZ 1066).